We begin with the raw amino-acid sequence, 427 residues long: Peptidase B (427 aa).

Lys-195 and Asp-200 together coordinate Mn(2+). Residue Lys-207 is part of the active site. The Mn(2+) site is built by Asp-218, Asp-277, and Glu-279. Arg-281 is an active-site residue.

This sequence belongs to the peptidase M17 family. As to quaternary structure, homohexamer. Mn(2+) serves as cofactor.

Its subcellular location is the cytoplasm. It catalyses the reaction Release of an N-terminal amino acid, Xaa, from a peptide or arylamide. Xaa is preferably Glu or Asp but may be other amino acids, including Leu, Met, His, Cys and Gln.. Its function is as follows. Probably plays an important role in intracellular peptide degradation. This chain is Peptidase B, found in Shigella flexneri.